The chain runs to 353 residues: Photosystem II protein D1 (353 aa).

Position 2 is an N-acetylthreonine (T2). T2 carries the post-translational modification Phosphothreonine. Helical transmembrane passes span 29 to 46 (YIGWFGVLMIPTLLTATS), 118 to 133 (HFLLGVACYMGREWEL), and 142 to 156 (WIAVAYSAPVAAATA). H118 is a binding site for chlorophyll a. Y126 is a pheophytin a binding site. Positions 170 and 189 each coordinate [CaMn4O5] cluster. The helical transmembrane segment at 197-218 (FHMLGVAGVFGGSLFSAMHGSL) threads the bilayer. Position 198 (H198) interacts with chlorophyll a. Residues H215 and 264–265 (SF) contribute to the a quinone site. H215 provides a ligand contact to Fe cation. Position 272 (H272) interacts with Fe cation. Residues 274–288 (FLAAWPVVGIWFTAL) traverse the membrane as a helical segment. [CaMn4O5] cluster-binding residues include H332, E333, D342, and A344. The propeptide occupies 345–353 (AVEVPSTNG).

This sequence belongs to the reaction center PufL/M/PsbA/D family. In terms of assembly, PSII is composed of 1 copy each of membrane proteins PsbA, PsbB, PsbC, PsbD, PsbE, PsbF, PsbH, PsbI, PsbJ, PsbK, PsbL, PsbM, PsbT, PsbX, PsbY, PsbZ, Psb30/Ycf12, at least 3 peripheral proteins of the oxygen-evolving complex and a large number of cofactors. It forms dimeric complexes. The D1/D2 heterodimer binds P680, chlorophylls that are the primary electron donor of PSII, and subsequent electron acceptors. It shares a non-heme iron and each subunit binds pheophytin, quinone, additional chlorophylls, carotenoids and lipids. D1 provides most of the ligands for the Mn4-Ca-O5 cluster of the oxygen-evolving complex (OEC). There is also a Cl(-1) ion associated with D1 and D2, which is required for oxygen evolution. The PSII complex binds additional chlorophylls, carotenoids and specific lipids. serves as cofactor. In terms of processing, tyr-161 forms a radical intermediate that is referred to as redox-active TyrZ, YZ or Y-Z. Post-translationally, C-terminally processed by CTPA; processing is essential to allow assembly of the oxygen-evolving complex and thus photosynthetic growth.

It localises to the plastid. The protein localises to the chloroplast thylakoid membrane. It carries out the reaction 2 a plastoquinone + 4 hnu + 2 H2O = 2 a plastoquinol + O2. Functionally, photosystem II (PSII) is a light-driven water:plastoquinone oxidoreductase that uses light energy to abstract electrons from H(2)O, generating O(2) and a proton gradient subsequently used for ATP formation. It consists of a core antenna complex that captures photons, and an electron transfer chain that converts photonic excitation into a charge separation. The D1/D2 (PsbA/PsbD) reaction center heterodimer binds P680, the primary electron donor of PSII as well as several subsequent electron acceptors. This Eucalyptus globulus subsp. globulus (Tasmanian blue gum) protein is Photosystem II protein D1.